The sequence spans 692 residues: Serine/threonine-protein phosphatase PP-Z1 (692 aa).

2 disordered regions span residues 1–309 (MGNS…DIEN) and 321–357 (ENVN…PKKF). The N-myristoyl glycine moiety is linked to residue Gly-2. Low complexity-rich tracts occupy residues 32 to 41 (SHSVKSAKSN), 49 to 69 (SLPS…STPS), and 91 to 122 (SSSH…RRSS). The residue at position 49 (Ser-49) is a Phosphoserine. Positions 170–179 (LTDDDNDDKD) are enriched in acidic residues. Residue Thr-171 is modified to Phosphothreonine. Over residues 190–204 (RSSNSRPSSIRSGSV) the composition is skewed to low complexity. Residues 207–216 (RKSDVTHEEP) show a composition bias toward basic and acidic residues. Residues Ser-209 and Ser-222 each carry the phosphoserine modification. Polar residues-rich tracts occupy residues 217–229 (NNGS…QENY) and 251–267 (FGSD…NSPG). Thr-261 is subject to Phosphothreonine. Ser-265 is subject to Phosphoserine. Over residues 280–289 (TSNSTSSLNH) the composition is skewed to low complexity. Basic and acidic residues predominate over residues 291-303 (SSRDIYPSKHISN). The span at 321 to 331 (ENVNDKNNNIT) shows a compositional bias: polar residues. The Mn(2+) site is built by Asp-419, His-421, Asp-447, and Asn-479. His-480 acts as the Proton donor in catalysis. Residues His-528 and His-603 each contribute to the Mn(2+) site. The tract at residues 672 to 692 (LANQQQQMMETSITNDNESQQ) is disordered. Residues 673–692 (ANQQQQMMETSITNDNESQQ) are compositionally biased toward polar residues. Ser-690 is subject to Phosphoserine.

This sequence belongs to the PPP phosphatase family. PP-Z subfamily. As to quaternary structure, interacts with SIS2 and VHS3, which regulate its activity. Mn(2+) is required as a cofactor.

It carries out the reaction O-phospho-L-seryl-[protein] + H2O = L-seryl-[protein] + phosphate. The enzyme catalyses O-phospho-L-threonyl-[protein] + H2O = L-threonyl-[protein] + phosphate. Inhibited by the regulatory subunits VHS3 and SIS2. Functionally, essential for the maintenance of cell size and integrity in response to osmotic stress. The protein is Serine/threonine-protein phosphatase PP-Z1 (PPZ1) of Saccharomyces cerevisiae (strain ATCC 204508 / S288c) (Baker's yeast).